The following is a 353-amino-acid chain: Quinolinate synthase (353 aa).

Iminosuccinate is bound by residues His-47 and Ser-68. Cys-113 lines the [4Fe-4S] cluster pocket. Iminosuccinate is bound by residues 139–141 and Ser-156; that span reads YAN. Cys-200 serves as a coordination point for [4Fe-4S] cluster. Iminosuccinate is bound by residues 226 to 228 and Thr-243; that span reads HPE. Cys-297 is a [4Fe-4S] cluster binding site.

The protein belongs to the quinolinate synthase family. Type 1 subfamily. [4Fe-4S] cluster is required as a cofactor.

The protein resides in the cytoplasm. It catalyses the reaction iminosuccinate + dihydroxyacetone phosphate = quinolinate + phosphate + 2 H2O + H(+). Its pathway is cofactor biosynthesis; NAD(+) biosynthesis; quinolinate from iminoaspartate: step 1/1. Functionally, catalyzes the condensation of iminoaspartate with dihydroxyacetone phosphate to form quinolinate. The polypeptide is Quinolinate synthase (Vibrio cholerae serotype O1 (strain ATCC 39541 / Classical Ogawa 395 / O395)).